We begin with the raw amino-acid sequence, 343 residues long: Phosphoglycerate mutase-like protein 2 (343 aa).

The transit peptide at 1–35 directs the protein to the chloroplast; it reads MIHQSMTSNLSFYISSVSHLSSPLPSLSRLSLRCC. The active-site Tele-phosphohistidine intermediate is the H65. The Proton donor/acceptor role is filled by E177. The disordered stretch occupies residues 322-343; sequence MTNYPGTILTGEDASSDIADQK.

The protein belongs to the phosphoglycerate mutase family.

It localises to the plastid. The protein resides in the chloroplast. May play a role in carbohydrates metabolism. This Arabidopsis thaliana (Mouse-ear cress) protein is Phosphoglycerate mutase-like protein 2.